The following is a 176-amino-acid chain: Transcription factor 21 (176 aa).

Residues 1-84 (MSTGSISDVD…QVQRNAANAR (84 aa)) form a disordered region. The segment covering 31 to 44 (GTSNESTEDSSNCE) has biased composition (polar residues). The bHLH domain occupies 76 to 128 (VQRNAANARERARMRVLSKAFSRLKTTLPWVPPDTKLSKLDTLRLASSYIAHL).

In terms of assembly, efficient DNA binding requires dimerization with another bHLH protein. As to expression, expressed in the cranial paraxial mesoderm from 20 hpf and subsequently becomes restricted to the pharyngeal mesoderm that will form the muscle. Expression in the proepicardial organ is first seen at 40hpf in a cluster of cells between the myocardium and yolk. Also expressed in the developing arches. Expression begins to surround the heart by day 3 of development, and by 96 hpf, expression is restricted to the outer epicardial layer surrounding the myocardium.

The protein resides in the nucleus. Its function is as follows. Involved in epithelial-mesenchymal interactions in kidney and lung morphogenesis that include epithelial differentiation and branching morphogenesis. This is Transcription factor 21 from Danio rerio (Zebrafish).